Here is a 131-residue protein sequence, read N- to C-terminus: Profilin-3 (131 aa).

Cys-13 and Cys-115 are disulfide-bonded. The short motif at 81–97 is the Involved in PIP2 interaction element; the sequence is AVIRGKKGAGGITIKKT. Thr-111 carries the post-translational modification Phosphothreonine.

It belongs to the profilin family. In terms of assembly, occurs in many kinds of cells as a complex with monomeric actin in a 1:1 ratio. Post-translationally, phosphorylated by MAP kinases.

Its subcellular location is the cytoplasm. The protein resides in the cytoskeleton. Functionally, binds to actin and affects the structure of the cytoskeleton. At high concentrations, profilin prevents the polymerization of actin, whereas it enhances it at low concentrations. This is Profilin-3 from Olea europaea (Common olive).